The primary structure comprises 156 residues: C-type lectin lectoxin-Phi2 (156 aa).

The first 23 residues, 1 to 23 (MGRFIFVSLGLLVLAFSLSGIGA), serve as a signal peptide directing secretion. 3 disulfides stabilise this stretch: Cys-27-Cys-38, Cys-55-Cys-154, and Cys-129-Cys-146. The C-type lectin domain occupies 34-155 (HNVSCYKLIN…CNRRHRFLCK (122 aa)). Residues Asn-35 and Asn-109 are each glycosylated (N-linked (GlcNAc...) asparagine). The Mannose-binding motif lies at 119-121 (EPN). Ca(2+) contacts are provided by Glu-127, Asn-142, and Asp-143.

This sequence belongs to the true venom lectin family. In terms of tissue distribution, expressed by the venom gland.

The protein localises to the secreted. Mannose-binding lectin which recognizes specific carbohydrate structures and agglutinates a variety of animal cells by binding to cell-surface glycoproteins and glycolipids. May be a calcium-dependent lectin. In Philodryas olfersii (Green snake), this protein is C-type lectin lectoxin-Phi2.